A 248-amino-acid chain; its full sequence is Ubiquinone/menaquinone biosynthesis C-methyltransferase UbiE (248 aa).

S-adenosyl-L-methionine contacts are provided by serine 68 and aspartate 92.

The protein belongs to the class I-like SAM-binding methyltransferase superfamily. MenG/UbiE family.

The enzyme catalyses a 2-demethylmenaquinol + S-adenosyl-L-methionine = a menaquinol + S-adenosyl-L-homocysteine + H(+). The catalysed reaction is a 2-methoxy-6-(all-trans-polyprenyl)benzene-1,4-diol + S-adenosyl-L-methionine = a 5-methoxy-2-methyl-3-(all-trans-polyprenyl)benzene-1,4-diol + S-adenosyl-L-homocysteine + H(+). It participates in quinol/quinone metabolism; menaquinone biosynthesis; menaquinol from 1,4-dihydroxy-2-naphthoate: step 2/2. The protein operates within cofactor biosynthesis; ubiquinone biosynthesis. Methyltransferase required for the conversion of demethylmenaquinol (DMKH2) to menaquinol (MKH2) and the conversion of 2-polyprenyl-6-methoxy-1,4-benzoquinol (DDMQH2) to 2-polyprenyl-3-methyl-6-methoxy-1,4-benzoquinol (DMQH2). This is Ubiquinone/menaquinone biosynthesis C-methyltransferase UbiE from Rickettsia akari (strain Hartford).